The primary structure comprises 375 residues: Ribosomal RNA large subunit methyltransferase F (375 aa).

Disordered regions lie at residues 1–39 (MKNN…AAVK) and 262–281 (NQRK…GKPT). A compositionally biased stretch (basic residues) spans 27 to 38 (AKPKRVKKKAAV).

This sequence belongs to the methyltransferase superfamily. METTL16/RlmF family.

It is found in the cytoplasm. The catalysed reaction is adenosine(1618) in 23S rRNA + S-adenosyl-L-methionine = N(6)-methyladenosine(1618) in 23S rRNA + S-adenosyl-L-homocysteine + H(+). Specifically methylates the adenine in position 1618 of 23S rRNA. This Vibrio parahaemolyticus serotype O3:K6 (strain RIMD 2210633) protein is Ribosomal RNA large subunit methyltransferase F.